A 2177-amino-acid polypeptide reads, in one-letter code: Protein sidekick-2 (2177 aa).

Residues 1–26 (MKGLGVPAAALLWGGLSALLPPSLPA) form the signal peptide. The Extracellular segment spans residues 27–1937 (DDVSPYFKTE…ANPFYEEWWF (1911 aa)). Ig-like C2-type domains follow at residues 31 to 113 (PYFK…TEVQ), 118 to 205 (GSFE…QPIT), 220 to 299 (PTII…SSVP), 313 to 401 (PQFV…TYLA), 407 to 496 (PNIT…ADLV), and 501 to 590 (TRIT…AHLR). A disulfide bridge connects residues C53 and C96. N-linked (GlcNAc...) asparagine glycans are attached at residues N198 and N228. 2 disulfides stabilise this stretch: C242-C289 and C335-C385. N408 is a glycosylation site (N-linked (GlcNAc...) asparagine). Disulfide bonds link C428-C480 and C522-C574. N-linked (GlcNAc...) asparagine glycans are attached at residues N582, N614, N709, N748, N809, N941, and N953. Fibronectin type-III domains follow at residues 597–693 (APES…LPEE), 698–794 (PPQN…TLQG), 799–898 (PPGN…THED), 902–996 (PVGH…VPPE), 1000–1099 (APTN…TLQA), 1104–1202 (APAN…TRES), 1207–1304 (GPSN…TLDD), 1305–1402 (VPGP…TEKR), 1407–1504 (PPSK…TLQA), 1509–1626 (APTI…VGEA), 1631–1727 (APQN…TQQA), 1731–1826 (APGS…TGPG), and 1829–1928 (APGP…AQKA). N-linked (GlcNAc...) asparagine glycans are attached at residues N1107, N1210, N1261, N1346, N1462, N1580, N1593, N1675, N1694, N1746, and N1820. Residues 1938-1958 (LVVIALVGLIFILLLVFVLII) form a helical membrane-spanning segment. Residues 1959-2177 (RGQSKKYAKK…APIGGFSSFV (219 aa)) are Cytoplasmic-facing. Disordered stretches follow at residues 2044–2071 (AESSSLTEKPSEVSDSQGSDSEYEVDPA) and 2103–2177 (QAYS…SSFV). 2 stretches are compositionally biased toward polar residues: residues 2045 to 2063 (ESSSLTEKPSEVSDSQGSD) and 2119 to 2130 (PLSNSTSTQQGS). Pro residues predominate over residues 2142–2151 (PQTPGNPPSQ). The PDZ-binding signature appears at 2171 to 2177 (GGFSSFV).

It belongs to the sidekick family. As to quaternary structure, homodimer; mediates homophilic interactions to promote cell adhesion. Expressed by non-overlapping subsets of retinal neurons. SDK1, SDK2, DSCAM and DSCAML1 are expressed in non-overlapping subsets of interneurons and retinal ganglion cells (RGCs) that form synapses in distinct inner plexiform layer (IPL) sublaminae.

It localises to the cell membrane. Its subcellular location is the synapse. Adhesion molecule that promotes lamina-specific synaptic connections in the retina. Expressed in specific subsets of interneurons and retinal ganglion cells (RGCs) and promotes synaptic connectivity via homophilic interactions. This chain is Protein sidekick-2, found in Gallus gallus (Chicken).